The primary structure comprises 338 residues: Microtubule-associated protein RP/EB family member 2 (338 aa).

Positions 1 to 21 (MPGPTQALSPNGENNNDIIQD) are disordered. The Calponin-homology (CH) domain maps to 57–159 (TMSRHDIIAW…FIQWFKKFFD (103 aa)). Disordered regions lie at residues 171–241 (EARQ…KDLE) and 300–338 (SEEH…FHFV). Residues 200-234 (SPTAGAAKSSPASKPGSTPSRPSSAKKAAPSSSAS) are compositionally biased toward low complexity. An EB1 C-terminal domain is found at 236–306 (SDKDLETQVI…LYASEEHESH (71 aa)). A compositionally biased stretch (basic and acidic residues) spans 300–327 (SEEHESHTEEHEGEEQVHEQPSSRRSTD). Residues 328–338 (SRSVSDNFHFV) show a composition bias toward low complexity.

The protein belongs to the MAPRE family.

Its subcellular location is the cytoplasm. It localises to the cytoskeleton. Functionally, may be involved in microtubule polymerization, and spindle function by stabilizing microtubules and anchoring them at centrosomes. The polypeptide is Microtubule-associated protein RP/EB family member 2 (MAPRE2) (Gallus gallus (Chicken)).